We begin with the raw amino-acid sequence, 428 residues long: GTPase Obg (428 aa).

The Obg domain maps to M1–L158. An OBG-type G domain is found at A159 to E329. GTP-binding positions include G165 to S172, F190 to V194, D212 to G215, N282 to D285, and S310 to V312. Mg(2+)-binding residues include S172 and T192. An OCT domain is found at K350–D428.

This sequence belongs to the TRAFAC class OBG-HflX-like GTPase superfamily. OBG GTPase family. In terms of assembly, monomer. Requires Mg(2+) as cofactor.

It is found in the cytoplasm. In terms of biological role, an essential GTPase which binds GTP, GDP and possibly (p)ppGpp with moderate affinity, with high nucleotide exchange rates and a fairly low GTP hydrolysis rate. Plays a role in control of the cell cycle, stress response, ribosome biogenesis and in those bacteria that undergo differentiation, in morphogenesis control. This chain is GTPase Obg, found in Bacillus cereus (strain B4264).